A 246-amino-acid polypeptide reads, in one-letter code: 1-(5-phosphoribosyl)-5-[(5-phosphoribosylamino)methylideneamino] imidazole-4-carboxamide isomerase (246 aa).

The active-site Proton acceptor is the D8. D131 (proton donor) is an active-site residue.

This sequence belongs to the HisA/HisF family.

The protein resides in the cytoplasm. It catalyses the reaction 1-(5-phospho-beta-D-ribosyl)-5-[(5-phospho-beta-D-ribosylamino)methylideneamino]imidazole-4-carboxamide = 5-[(5-phospho-1-deoxy-D-ribulos-1-ylimino)methylamino]-1-(5-phospho-beta-D-ribosyl)imidazole-4-carboxamide. The protein operates within amino-acid biosynthesis; L-histidine biosynthesis; L-histidine from 5-phospho-alpha-D-ribose 1-diphosphate: step 4/9. This is 1-(5-phosphoribosyl)-5-[(5-phosphoribosylamino)methylideneamino] imidazole-4-carboxamide isomerase from Bordetella avium (strain 197N).